The sequence spans 113 residues: Small ribosomal subunit protein bS6 (113 aa).

The protein belongs to the bacterial ribosomal protein bS6 family.

In terms of biological role, binds together with bS18 to 16S ribosomal RNA. In Ruthia magnifica subsp. Calyptogena magnifica, this protein is Small ribosomal subunit protein bS6.